The sequence spans 393 residues: NAD(P)H-quinone oxidoreductase subunit H 1 (393 aa).

It belongs to the complex I 49 kDa subunit family. In terms of assembly, NDH-1 can be composed of about 15 different subunits; different subcomplexes with different compositions have been identified which probably have different functions.

The protein resides in the cell inner membrane. The catalysed reaction is a plastoquinone + NADH + (n+1) H(+)(in) = a plastoquinol + NAD(+) + n H(+)(out). It catalyses the reaction a plastoquinone + NADPH + (n+1) H(+)(in) = a plastoquinol + NADP(+) + n H(+)(out). Its function is as follows. NDH-1 shuttles electrons from an unknown electron donor, via FMN and iron-sulfur (Fe-S) centers, to quinones in the respiratory and/or the photosynthetic chain. The immediate electron acceptor for the enzyme in this species is believed to be plastoquinone. Couples the redox reaction to proton translocation, and thus conserves the redox energy in a proton gradient. Cyanobacterial NDH-1 also plays a role in inorganic carbon-concentration. The chain is NAD(P)H-quinone oxidoreductase subunit H 1 from Gloeobacter violaceus (strain ATCC 29082 / PCC 7421).